Reading from the N-terminus, the 666-residue chain is Protein scarlet (666 aa).

The Cytoplasmic segment spans residues 1-417 (MSDSDSKRID…TIQWLRFIQK (417 aa)). Positions 26-55 (PVGSTIEVPSLDSTPKLSKRNSSERSLPLR) are disordered. Positions 69 to 316 (LVWRDLCVYT…FANHGYYCPE (248 aa)) constitute an ABC transporter domain. 108 to 115 (GSSGSGKT) is a binding site for ATP. The chain crosses the membrane as a helical span at residues 418–438 (IAMAFIIGACFAGTTEPSQLG). At 439-444 (VQAVQG) the chain is on the extracellular side. A helical transmembrane segment spans residues 445-465 (ALFIMISENTYHPMYSVLNLF). The Cytoplasmic portion of the chain corresponds to 466-490 (PQGFPLFMRETRSGLYSTGQYYAAN). A helical transmembrane segment spans residues 491 to 511 (ILALLPGMIIEPLIFVIICYW). Topologically, residues 512 to 518 (LTGLRST) are extracellular. A helical membrane pass occupies residues 519-539 (FYAFGVTAMCVVLVMNVATAC). The Cytoplasmic segment spans residues 540 to 551 (GCFFSTAFNSVP). A helical transmembrane segment spans residues 552–572 (LAMAYLVPLDYIFMITSGIFI). At 573–639 (QVNSLPVAFW…YSFNESNVYR (67 aa)) the chain is on the extracellular side. 2 N-linked (GlcNAc...) asparagine glycosylation sites follow: Asn607 and Asn633. Residues 640–660 (NLLAMVGLYFGFHLLGYYCLW) form a helical membrane-spanning segment. Over 661 to 666 (RRARKL) the chain is Cytoplasmic.

It belongs to the ABC transporter superfamily. ABCG family. Eye pigment precursor importer (TC 3.A.1.204) subfamily. May form a heterodimer with w/white. As to expression, expressed in the eye, specifically in primary pigment cells, secondary pigment cells and retinula cells (at protein level).

Its subcellular location is the cytoplasmic vesicle membrane. The enzyme catalyses L-kynurenine(out) + ATP + H2O = L-kynurenine(in) + ADP + phosphate + H(+). In terms of biological role, ATP-dependent transporter of the ATP-binding cassette (ABC) family which transports various molecules including bioamines, neurotransmitters and metabolic intermediates. In the eye and probably in association with w/white, required for the transport of the eye brown pigment precursors, kynurenine and probably tryptophan, into pigment cell granules. In Malpighian tubules and pupal eyes, involved in kynurenine transport. Probably in association with w/white, plays a role in zinc storage granule biogenesis in Malpighian tubule principal epithelial cells. The sequence is that of Protein scarlet from Drosophila melanogaster (Fruit fly).